A 483-amino-acid polypeptide reads, in one-letter code: Probable cytosol aminopeptidase (483 aa).

Mn(2+) is bound by residues lysine 252 and aspartate 257. Lysine 264 is a catalytic residue. Residues aspartate 275, aspartate 334, and glutamate 336 each coordinate Mn(2+). The active site involves arginine 338.

The protein belongs to the peptidase M17 family. Requires Mn(2+) as cofactor.

It localises to the cytoplasm. It catalyses the reaction Release of an N-terminal amino acid, Xaa-|-Yaa-, in which Xaa is preferably Leu, but may be other amino acids including Pro although not Arg or Lys, and Yaa may be Pro. Amino acid amides and methyl esters are also readily hydrolyzed, but rates on arylamides are exceedingly low.. It carries out the reaction Release of an N-terminal amino acid, preferentially leucine, but not glutamic or aspartic acids.. In terms of biological role, presumably involved in the processing and regular turnover of intracellular proteins. Catalyzes the removal of unsubstituted N-terminal amino acids from various peptides. This Legionella pneumophila (strain Corby) protein is Probable cytosol aminopeptidase.